A 223-amino-acid chain; its full sequence is Shematrin-like protein 2 (223 aa).

Positions 1 to 19 (MRILANLILLGVLFGVCLC) are cleaved as a signal peptide.

In terms of tissue distribution, prismatic layer of shell (at protein level).

The protein resides in the secreted. This chain is Shematrin-like protein 2, found in Margaritifera margaritifera (Freshwater pearl mussel).